A 247-amino-acid chain; its full sequence is Probable transcriptional regulatory protein lpp1249 (247 aa).

This sequence belongs to the TACO1 family.

Its subcellular location is the cytoplasm. This Legionella pneumophila (strain Paris) protein is Probable transcriptional regulatory protein lpp1249.